The chain runs to 305 residues: NK1 transcription factor-related protein 2 (305 aa).

2 disordered regions span residues 51 to 158 and 210 to 257; these read EEVE…KPRR and KWKK…PGAL. Acidic residues predominate over residues 87–96; sequence SEAEEEEEAE. Residues 97 to 115 are compositionally biased toward basic and acidic residues; it reads DAGRAHQPERWQGVHEGSP. Residues 129–140 show a composition bias toward low complexity; the sequence is AEGLPASPGSPG. The homeobox DNA-binding region spans 156–215; the sequence is PRRARTAFTYEQLVALENKFRATRYLSVCERLNLALSLSLTETQVKIWFQNRRTKWKKQN.

The protein belongs to the NK-1 homeobox family. As to quaternary structure, interacts (via the homeodomain) with HIPK1, HIPK2, and HIPK3. Phosphorylated by HIPK2 in vitro. In terms of tissue distribution, expression detected in the brain, testis and spleen. In the testis, expressed in the germ cells of the seminiferous epithelium, predominantly in elongating spermatids and spermatozoa. Expressed throughout the brain with highest levels in regions of the cerebral cortex, hippocampus, diencephalon, pons, medulla and cerebellum.

It localises to the nucleus. The protein resides in the nucleolus. Its function is as follows. Transcriptional repressor. May play a role in early development as a Wnt/beta-catenin effector, hence controlling pluripotency and preimplantation development of embryonic stem cells. May promote adipogenesis in mesenchymal stem cells, possibly by inhibiting the expression of the antiadipogenic factor NR2F2. May inhibit osteoblastogenic differentiation. The chain is NK1 transcription factor-related protein 2 (Nkx1-2) from Mus musculus (Mouse).